Reading from the N-terminus, the 382-residue chain is MKITHITTYRLPPRWMFLKIETDEGVVGWGEPVIEGRARTVEAAVHEFADYLIGKDPARINDLWQVMYRAGFYRGGPIMMSAIAGIDQALWDIKGKVLNAPVWQLMGGLVRDKIKAYSWVGGDRPADVIDGIEKLRGIGFDTFKLNGCEEMGVIDNSRAVDAAVNTVAQIREAFGSEIEFGLDFHGRVSAPMAKVLIKELEPYRPLFIEEPVLAEQEEYYPRLAAQTHIPIAAGERMFSRFEFKRVLDAGGLAILQPDLSHAGGITECYKIAGMAEAYDVALAPHCPLGPIALAACLHIDFVSRNAVFQEQSMGIHYNKGAELLDFVKNKEDFSMDGGFFKPLTKPGLGVDIDEARVIELSKSAPDWRNPLWRHADGSVAEW.

D183 is a Mg(2+) binding site. H185 serves as the catalytic Proton donor. Mg(2+) contacts are provided by E209 and E235. Residue H285 is the Proton acceptor of the active site.

This sequence belongs to the mandelate racemase/muconate lactonizing enzyme family. GalD subfamily. Requires Mg(2+) as cofactor.

It catalyses the reaction D-galactonate = 2-dehydro-3-deoxy-D-galactonate + H2O. Its pathway is carbohydrate acid metabolism; D-galactonate degradation; D-glyceraldehyde 3-phosphate and pyruvate from D-galactonate: step 1/3. Catalyzes the dehydration of D-galactonate to 2-keto-3-deoxy-D-galactonate. The chain is D-galactonate dehydratase from Salmonella gallinarum (strain 287/91 / NCTC 13346).